The following is a 180-amino-acid chain: ATP synthase subunit b 2 (180 aa).

A helical membrane pass occupies residues 33–53 (IFWLLVTLVAIYFLLTRVALP).

It belongs to the ATPase B chain family. In terms of assembly, F-type ATPases have 2 components, F(1) - the catalytic core - and F(0) - the membrane proton channel. F(1) has five subunits: alpha(3), beta(3), gamma(1), delta(1), epsilon(1). F(0) has three main subunits: a(1), b(2) and c(10-14). The alpha and beta chains form an alternating ring which encloses part of the gamma chain. F(1) is attached to F(0) by a central stalk formed by the gamma and epsilon chains, while a peripheral stalk is formed by the delta and b chains.

The protein resides in the cell inner membrane. Its function is as follows. F(1)F(0) ATP synthase produces ATP from ADP in the presence of a proton or sodium gradient. F-type ATPases consist of two structural domains, F(1) containing the extramembraneous catalytic core and F(0) containing the membrane proton channel, linked together by a central stalk and a peripheral stalk. During catalysis, ATP synthesis in the catalytic domain of F(1) is coupled via a rotary mechanism of the central stalk subunits to proton translocation. Functionally, component of the F(0) channel, it forms part of the peripheral stalk, linking F(1) to F(0). The b'-subunit is a diverged and duplicated form of b found in plants and photosynthetic bacteria. In Cereibacter sphaeroides (strain ATCC 17029 / ATH 2.4.9) (Rhodobacter sphaeroides), this protein is ATP synthase subunit b 2 (atpF2).